Reading from the N-terminus, the 34-residue chain is Trypsin inhibitor 1 (34 aa).

A cross-link (cyclopeptide (Ser-Gly)) is located at residues 1–34 (SGSDGGVCPKILQRCRRDSDCPGACICRGNGYCG). Cystine bridges form between C8–C25, C15–C27, and C21–C33.

Post-translationally, this is a cyclic peptide.

It localises to the secreted. Functionally, inhibits trypsin; probably participates in a plant defense mechanism. The protein is Trypsin inhibitor 1 of Momordica cochinchinensis (Spiny bitter cucumber).